A 236-amino-acid polypeptide reads, in one-letter code: tRNA1(Val) (adenine(37)-N6)-methyltransferase (236 aa).

This sequence belongs to the methyltransferase superfamily. tRNA (adenine-N(6)-)-methyltransferase family.

The protein resides in the cytoplasm. It catalyses the reaction adenosine(37) in tRNA1(Val) + S-adenosyl-L-methionine = N(6)-methyladenosine(37) in tRNA1(Val) + S-adenosyl-L-homocysteine + H(+). Functionally, specifically methylates the adenine in position 37 of tRNA(1)(Val) (anticodon cmo5UAC). The chain is tRNA1(Val) (adenine(37)-N6)-methyltransferase from Actinobacillus succinogenes (strain ATCC 55618 / DSM 22257 / CCUG 43843 / 130Z).